We begin with the raw amino-acid sequence, 350 residues long: CMP-N-acetylneuraminate-beta-galactosamide-alpha-2,3-sialyltransferase 2 (350 aa).

Topologically, residues 1 to 6 (MKCSLR) are cytoplasmic. A helical; Signal-anchor for type II membrane protein membrane pass occupies residues 7–27 (VWFLSMAFLLVFIMSLLFTYS). The Lumenal segment spans residues 28 to 350 (HHSMATLPYL…ASKIEVYRGN (323 aa)). Disulfide bonds link C70–C75, C72–C149, and C152–C291. Positions 116, 157, and 180 each coordinate substrate. N-linked (GlcNAc...) asparagine glycosylation is present at N211. Substrate contacts are provided by Y240, Y276, G280, G300, H309, and H326.

The protein belongs to the glycosyltransferase 29 family. As to quaternary structure, homodimer; disulfide-linked. Homodimer formation occurs in the endoplasmic reticulum. In terms of processing, the soluble form derives from the membrane form by proteolytic processing. Post-translationally, N-glycosylated; necessary for proper exit from endoplasmic reticulum and trafficking to the Golgi apparatus.

It is found in the golgi apparatus. It localises to the golgi stack membrane. The protein resides in the secreted. The catalysed reaction is a beta-D-galactosyl-(1-&gt;3)-N-acetyl-alpha-D-galactosaminyl derivative + CMP-N-acetyl-beta-neuraminate = an N-acetyl-alpha-neuraminyl-(2-&gt;3)-beta-D-galactosyl-(1-&gt;3)-N-acetyl-alpha-D-galactosaminyl derivative + CMP + H(+). The enzyme catalyses a ganglioside GM1 (d18:1(4E)) + CMP-N-acetyl-beta-neuraminate = a ganglioside GD1a (d18:1(4E)) + CMP + H(+). It carries out the reaction ganglioside GM1 (d18:1(4E)/18:0) + CMP-N-acetyl-beta-neuraminate = ganglioside GD1a (18:1(4E)/18:0) + CMP + H(+). It catalyses the reaction a ganglioside GA1 + CMP-N-acetyl-beta-neuraminate = a ganglioside GM1b + CMP + H(+). The catalysed reaction is a ganglioside GA1 (d18:1(4E)) + CMP-N-acetyl-beta-neuraminate = a ganglioside GM1b (d18:1(4E)) + CMP + H(+). The enzyme catalyses a globoside GalGb4Cer + CMP-N-acetyl-beta-neuraminate = a globoside MSGG + CMP + H(+). It participates in protein modification; protein glycosylation. Its pathway is glycolipid biosynthesis. A beta-galactoside alpha2-3 sialyltransferase primarily involved in terminal sialylation of ganglio and globo series glycolipids. Catalyzes the transfer of sialic acid (N-acetyl-neuraminic acid; Neu5Ac) from the nucleotide sugar donor CMP-Neu5Ac onto acceptor Galbeta-(1-&gt;3)-GalNAc-terminated glycoconjugates through an alpha2-3 linkage. Sialylates GM1/GM1a, GA1/asialo-GM1 gangliosides to form GD1a and GM1b, respectively. Together with ST3GAL3, primarily responsible for biosynthesis of brain gangliosides that function as ligand for myelin-associated glycoprotein MAG on axons, regulating MAG expression and axonal myelin stability and regeneration. Responsible for the sialylation of the pluripotent stem cell- and cancer stem cell-associated antigen SSEA3, forming SSEA4. Sialylates with low efficiency asialofetuin, presumably onto O-glycosidically linked Galbeta-(1-&gt;3)-GalNAc-O-Ser. This Rattus norvegicus (Rat) protein is CMP-N-acetylneuraminate-beta-galactosamide-alpha-2,3-sialyltransferase 2 (St3gal2).